The chain runs to 100 residues: MAEEHNHNHEEENIIWITNEEGKEEAYEILFDFDSKDFDKSYVLYFPAGKGEDEEIEILASSYIQDEEGKQGQLKPVETDEEWDMIEEILATFLADEDEE.

This sequence belongs to the UPF0473 family.

In Listeria monocytogenes serotype 4a (strain HCC23), this protein is UPF0473 protein LMHCC_1068.